The sequence spans 253 residues: 28 kDa inner dynein arm light chain, axonemal (253 aa).

The segment at 19–44 is disordered; the sequence is TSKDKGKGAKGTPGKKGALPPVEQKP. Residues 160 to 239 adopt a coiled-coil conformation; that stretch reads IRKALQTEQG…LKQQLETFLV (80 aa).

The protein belongs to the inner dynein arm light chain family.

Its subcellular location is the cytoplasm. The protein resides in the cytoskeleton. It localises to the flagellum axoneme. Its function is as follows. Plays a dynamic role in flagellar motility. May be necessary for stable assembly of a subset of inner dynein arms or for the binding of these arms to the outer doublet microtubules of the axoneme. The protein is 28 kDa inner dynein arm light chain, axonemal (IDA4) of Chlamydomonas reinhardtii (Chlamydomonas smithii).